The sequence spans 241 residues: Folate receptor alpha (241 aa).

An N-terminal signal peptide occupies residues 1–19 (MAWQMTQLLLLALVAAAWG). 8 disulfides stabilise this stretch: Cys-36-Cys-64, Cys-56-Cys-104, Cys-65-Cys-108, Cys-88-Cys-174, Cys-95-Cys-145, Cys-134-Cys-208, Cys-138-Cys-188, and Cys-151-Cys-168. A glycan (N-linked (GlcNAc...) asparagine) is linked at Asn-68. Folate contacts are provided by residues Asp-102, Tyr-106, 123 to 127 (WRKER), 156 to 161 (HKGWNW), and Ser-195. Asn-160 carries N-linked (GlcNAc...) asparagine glycosylation. Residue Ser-234 is the site of GPI-anchor amidated serine attachment. Residues 235-241 (GSTPQGI) constitute a propeptide, removed in mature form.

Belongs to the folate receptor family. The secreted form is derived from the membrane-bound form either by cleavage of the GPI anchor, or/and by proteolysis catalyzed by a metalloprotease. In terms of tissue distribution, detected in milk (at protein level).

Its subcellular location is the cell membrane. It localises to the apical cell membrane. The protein localises to the basolateral cell membrane. The protein resides in the secreted. It is found in the cytoplasmic vesicle. Its subcellular location is the clathrin-coated vesicle. It localises to the endosome. Binds to folate and reduced folic acid derivatives and mediates delivery of 5-methyltetrahydrofolate and folate analogs into the interior of cells. Has high affinity for folate and folic acid analogs at neutral pH. Exposure to slightly acidic pH after receptor endocytosis triggers a conformation change that strongly reduces its affinity for folates and mediates their release. Required for normal embryonic development and normal cell proliferation. This is Folate receptor alpha (FOLR1) from Bos taurus (Bovine).